The primary structure comprises 146 residues: Histone H2A.1 (146 aa).

Residues 118 to 146 (SPAAAEKEAKSPKKKTSTKSPKKKVAAKE) are disordered. 2 consecutive short sequence motifs (SPKK motif) follow at residues 128–131 (SPKK) and 137–140 (SPKK). Over residues 129–146 (PKKKTSTKSPKKKVAAKE) the composition is skewed to basic residues.

Belongs to the histone H2A family. As to quaternary structure, the nucleosome is a histone octamer containing two molecules each of H2A, H2B, H3 and H4 assembled in one H3-H4 heterotetramer and two H2A-H2B heterodimers. The octamer wraps approximately 147 bp of DNA. In terms of processing, phosphorylated within its C-terminal part, probably at the SPKK motifs. In terms of tissue distribution, expressed preferentially in meristematic tissues of young seedlings, in stigma and ovary but not in pollen.

It is found in the nucleus. The protein resides in the chromosome. In terms of biological role, core component of nucleosome. Nucleosomes wrap and compact DNA into chromatin, limiting DNA accessibility to the cellular machineries which require DNA as a template. Histones thereby play a central role in transcription regulation, DNA repair, DNA replication and chromosomal stability. DNA accessibility is regulated via a complex set of post-translational modifications of histones, also called histone code, and nucleosome remodeling. The protein is Histone H2A.1 (H2A-9) of Triticum aestivum (Wheat).